The sequence spans 122 residues: Large ribosomal subunit protein uL14 (122 aa).

Belongs to the universal ribosomal protein uL14 family. Part of the 50S ribosomal subunit. Forms a cluster with proteins L3 and L19. In the 70S ribosome, L14 and L19 interact and together make contacts with the 16S rRNA in bridges B5 and B8.

In terms of biological role, binds to 23S rRNA. Forms part of two intersubunit bridges in the 70S ribosome. This chain is Large ribosomal subunit protein uL14, found in Jannaschia sp. (strain CCS1).